The following is a 251-amino-acid chain: Hydroxyacylglutathione hydrolase (251 aa).

The Zn(2+) site is built by His-53, His-55, Asp-57, His-58, His-110, Asp-127, and His-165.

Belongs to the metallo-beta-lactamase superfamily. Glyoxalase II family. As to quaternary structure, monomer. Zn(2+) serves as cofactor.

It catalyses the reaction an S-(2-hydroxyacyl)glutathione + H2O = a 2-hydroxy carboxylate + glutathione + H(+). Its pathway is secondary metabolite metabolism; methylglyoxal degradation; (R)-lactate from methylglyoxal: step 2/2. In terms of biological role, thiolesterase that catalyzes the hydrolysis of S-D-lactoyl-glutathione to form glutathione and D-lactic acid. The polypeptide is Hydroxyacylglutathione hydrolase (Escherichia coli (strain SE11)).